The sequence spans 87 residues: Large ribosomal subunit protein bL27 (87 aa).

Residues 1–25 (MAHKKGASSSRNGRDSNAQRLGVKR) are disordered. Polar residues predominate over residues 7–19 (ASSSRNGRDSNAQ).

The protein belongs to the bacterial ribosomal protein bL27 family.

This is Large ribosomal subunit protein bL27 from Rhodococcus jostii (strain RHA1).